Here is a 363-residue protein sequence, read N- to C-terminus: MIIDTTEVQAINSFSRLESLKEVYGIIWVLIPIFTPVLGITIGVLVIVWLEREISAGIQQRIGPEYAGPLGILQALADGTKLLFKENLLPSRGDTRLFSIGPSIAVISILLSYLVIPFGYRLVLADLSIGVFLWIAISSIAPVGLLMSGYGSNNKYSFLGGLRAAAQSISYEIPLTLCVLSISLLSNSSSTVDIVEAQSKYGFWGWNLWRQPIGFLVFLISSLAECERLPFDLPEAEEELVAGYQTEYSGIKFGLFYVASYLNLLVSSLFVTVLYLGGWNLSIPYIPVPELFDITKRGRVFGTIIGIFITLAKTYLFLFIPIATRWTLPRLRMDQLLNLGWKFLLPISLGNLLLTTSSQLLSL.

6 helical membrane-spanning segments follow: residues 26–46 (IIWV…GVLV), 98–118 (FSIG…VIPF), 127–147 (LSIG…GLLM), 253–273 (FGLF…FVTV), 300–320 (VFGT…FLFI), and 336–356 (LLNL…LLTT).

It belongs to the complex I subunit 1 family. In terms of assembly, NDH is composed of at least 16 different subunits, 5 of which are encoded in the nucleus.

The protein localises to the plastid. It is found in the chloroplast thylakoid membrane. It catalyses the reaction a plastoquinone + NADH + (n+1) H(+)(in) = a plastoquinol + NAD(+) + n H(+)(out). It carries out the reaction a plastoquinone + NADPH + (n+1) H(+)(in) = a plastoquinol + NADP(+) + n H(+)(out). Its function is as follows. NDH shuttles electrons from NAD(P)H:plastoquinone, via FMN and iron-sulfur (Fe-S) centers, to quinones in the photosynthetic chain and possibly in a chloroplast respiratory chain. The immediate electron acceptor for the enzyme in this species is believed to be plastoquinone. Couples the redox reaction to proton translocation, and thus conserves the redox energy in a proton gradient. The polypeptide is NAD(P)H-quinone oxidoreductase subunit 1, chloroplastic (Helianthus annuus (Common sunflower)).